We begin with the raw amino-acid sequence, 425 residues long: Isocitrate dehydrogenase [NADP] (425 aa).

Thr114 contributes to the NADP(+) binding site. The D-threo-isocitrate site is built by Ser123, Asn125, Arg129, Arg139, and Arg162. Asp316 lines the Mg(2+) pocket. Residues 348–354 (HGTAPKY), Asn361, Tyr400, and Arg404 contribute to the NADP(+) site.

The protein belongs to the isocitrate and isopropylmalate dehydrogenases family. Homodimer. Mg(2+) serves as cofactor. It depends on Mn(2+) as a cofactor.

The enzyme catalyses D-threo-isocitrate + NADP(+) = 2-oxoglutarate + CO2 + NADPH. Functionally, catalyzes the oxidative decarboxylation of isocitrate to 2-oxoglutarate and carbon dioxide with the concomitant reduction of NADP(+). The polypeptide is Isocitrate dehydrogenase [NADP] (icd) (Helicobacter pylori (strain J99 / ATCC 700824) (Campylobacter pylori J99)).